Here is a 700-residue protein sequence, read N- to C-terminus: Cap-specific mRNA (nucleoside-2'-O-)-methyltransferase 2 (700 aa).

A disordered region spans residues 1 to 21 (MSFRSSPQGKPHPMTDYQSIR). In terms of domain architecture, Adrift-type SAM-dependent 2'-O-MTase spans 109 to 321 (EFVTVAWCKL…VYVICLNYNK (213 aa)). Lys117 is an active-site residue. Residues Gly143, Trp164, and Asp234 each contribute to the S-adenosyl-L-methionine site. Asp234 is an active-site residue. Residue Lys274 is the Proton acceptor of the active site.

The protein resides in the nucleus. The enzyme catalyses a 5'-end (N(7)-methyl 5'-triphosphoguanosine)-(2'-O-methyl-ribonucleoside)-(ribonucleotide) in mRNA + S-adenosyl-L-methionine = a 5'-end (N(7)-methyl 5'-triphosphoguanosine)-(2'-O-methyl-ribonucleoside)-(2'-O-methyl-ribonucleotide) in mRNA + S-adenosyl-L-homocysteine + H(+). In terms of biological role, probable S-adenosyl-L-methionine-dependent methyltransferase that mediates mRNA cap2 2'-O-ribose methylation to the 5'-cap structure of mRNAs. May methylate the ribose of the second nucleotide of a m(7)GpppG-capped mRNA (cap0) to produce m(7)GpppRmpNm (cap2). Regulates expression of tracheal genes required for pathfinding on the segmental nerve. The sequence is that of Cap-specific mRNA (nucleoside-2'-O-)-methyltransferase 2 (cmtr2) from Drosophila melanogaster (Fruit fly).